The chain runs to 354 residues: Ribosomal RNA large subunit methyltransferase M (354 aa).

Residues serine 183, 216–219 (SPGG), aspartate 235, aspartate 255, and aspartate 271 each bind S-adenosyl-L-methionine. Catalysis depends on lysine 300, which acts as the Proton acceptor.

This sequence belongs to the class I-like SAM-binding methyltransferase superfamily. RNA methyltransferase RlmE family. RlmM subfamily. As to quaternary structure, monomer.

It is found in the cytoplasm. The catalysed reaction is cytidine(2498) in 23S rRNA + S-adenosyl-L-methionine = 2'-O-methylcytidine(2498) in 23S rRNA + S-adenosyl-L-homocysteine + H(+). In terms of biological role, catalyzes the 2'-O-methylation at nucleotide C2498 in 23S rRNA. This Pseudomonas putida (strain ATCC 47054 / DSM 6125 / CFBP 8728 / NCIMB 11950 / KT2440) protein is Ribosomal RNA large subunit methyltransferase M.